The chain runs to 70 residues: Putative membrane protein insertion efficiency factor (70 aa).

It belongs to the UPF0161 family.

It localises to the cell inner membrane. Could be involved in insertion of integral membrane proteins into the membrane. The protein is Putative membrane protein insertion efficiency factor of Geobacter sp. (strain M21).